Reading from the N-terminus, the 296-residue chain is Formamidopyrimidine-DNA glycosylase (296 aa).

Pro-2 (schiff-base intermediate with DNA) is an active-site residue. Glu-3 acts as the Proton donor in catalysis. Residue Lys-61 is the Proton donor; for beta-elimination activity of the active site. 3 residues coordinate DNA: His-104, Arg-123, and Lys-169. The FPG-type zinc finger occupies 255 to 289; it reads DAYGREGEPCRRCGAIMRREKFMNRSSFYCPRCQP. Arg-279 (proton donor; for delta-elimination activity) is an active-site residue.

The protein belongs to the FPG family. Monomer. It depends on Zn(2+) as a cofactor.

The enzyme catalyses Hydrolysis of DNA containing ring-opened 7-methylguanine residues, releasing 2,6-diamino-4-hydroxy-5-(N-methyl)formamidopyrimidine.. It catalyses the reaction 2'-deoxyribonucleotide-(2'-deoxyribose 5'-phosphate)-2'-deoxyribonucleotide-DNA = a 3'-end 2'-deoxyribonucleotide-(2,3-dehydro-2,3-deoxyribose 5'-phosphate)-DNA + a 5'-end 5'-phospho-2'-deoxyribonucleoside-DNA + H(+). Functionally, involved in base excision repair of DNA damaged by oxidation or by mutagenic agents. Acts as a DNA glycosylase that recognizes and removes damaged bases. Has a preference for oxidized purines, such as 7,8-dihydro-8-oxoguanine (8-oxoG). Has AP (apurinic/apyrimidinic) lyase activity and introduces nicks in the DNA strand. Cleaves the DNA backbone by beta-delta elimination to generate a single-strand break at the site of the removed base with both 3'- and 5'-phosphates. In Mycobacterium sp. (strain JLS), this protein is Formamidopyrimidine-DNA glycosylase.